The primary structure comprises 163 residues: MKLKAIILATGLINCIAFSAQAVDTTITVTGNVLQRTCNVPGNVDVSLGNLYVSDFPNAGSGSPWVNFDLSLTGCQNMNTVRATFSGTADGQTYYANTGNAGGIKIEIQDRDGSNASYHNGMFKTLNVQNNNATFNLKARAVSKGQVTPGNISSVITVTYTYA.

Positions 1–22 (MKLKAIILATGLINCIAFSAQA) are cleaved as a signal peptide. Cys38 and Cys75 form a disulfide bridge. The tract at residues 138–144 (KARAVSK) is involved in sialic acid binding.

Belongs to the fimbrial protein family.

The protein resides in the fimbrium. Its function is as follows. Fimbriae (also called pili), polar filaments radiating from the surface of the bacterium to a length of 0.5-1.5 micrometers and numbering 100-300 per cell, enable bacteria to colonize the epithelium of specific host organs. Functionally, a minor fimbrial subunit, this protein is necessary for full expression of S-specific binding. S-fimbrial adhesins enable pathogenic E.coli causing urinary-tract infections or newborn meningitis to attach to glycoproteins terminating with alpha-sialic acid-(2-3)-beta-Gal. This protein binds to the alpha-sialic acid-(2-3)-beta-Gal and is thus responsible for erythrocyte recognition and hemagglutination. The polypeptide is S-fimbrial adhesin protein SfaS (sfaS) (Escherichia coli O6:K15:H31 (strain 536 / UPEC)).